The sequence spans 616 residues: MKRDVRILLLGEAQVGKTSLIMALVGEEFPDEVPSRAEEITIPADVTPERIPTHIVDYSGVEQTEDELREEIAKANVVCVVYDVTDLETIEKIGSKWIPMVNGNAERNSRLPIILVGNKSDLQCGSSMESILPIMNQFSEIETCVECSAKNLKNISEVFYYAQKAVLHPTAPLYDPEEKQLRPQCKKALTRIFTISEQDNNQILSDEELNFFQQSCFGNPLAPQALEDVKMVVKKNTADGVRDNGLTLNGFLFLNTLFIQRGRHETTWTILRRFGYDDALELTDDYLYPPLRIPHESSTELNHFGYQFLQKAFEKHDLDEDGALSPSELQSFFSVFPYTPWGPELASTVCTAQGGYLPLHGYLCQWTLVAYLDVHRCLEHLGYLGYPILCEQESQTHAITVTREKSIDLEKGQTQRNVFLCRVIGPRGTGKSAFLRAFLGQSLEEQQQSNKPPSFYSVNTVLVGGQEKYLILFEVDVDTEFLKTSDAPCDVACLMYDVSDSKSFNYCASIYKQHYMESQTPCLFVGCKYDQGEVKQQHGISPAEFCHKHRLPPPYHFTCQGTPDRTIYSKLATAAAFPHLHDTELSTASFWLRVALGATVAAVVGFTLYKALLRSK.

At 1–590 (MKRDVRILLL…HDTELSTASF (590 aa)) the chain is on the cytoplasmic side. The Miro 1 domain maps to 2–168 (KRDVRILLLG…FYYAQKAVLH (167 aa)). GTP-binding residues include Gly16, Lys17, Thr18, and Ser19. Position 18 (Thr18) interacts with Mg(2+). Position 57 (Asp57) interacts with Mg(2+). GTP-binding residues include Ser59, Asn118, Lys119, Asp121, Ala149, and Lys150. EF-hand domains lie at 184–219 (QCKK…CFGN) and 304–339 (FGYQ…FPYT). Residues Asp199, Asn201, Glu208, Asp317, Asp319, Asp321, and Glu328 each coordinate Ca(2+). Residues 416–577 (RNVFLCRVIG…YSKLATAAAF (162 aa)) form the Miro 2 domain. Gly428, Gly430, Lys431, Ser432, and Ala433 together coordinate GTP. Ser432 serves as a coordination point for Mg(2+). Glu474 serves as a coordination point for Mg(2+). GTP contacts are provided by Lys528, Asp530, and Cys559. Residues 591–613 (WLRVALGATVAAVVGFTLYKALL) form a helical; Anchor for type IV membrane protein membrane-spanning segment. At 614-616 (RSK) the chain is on the mitochondrial intermembrane side.

Belongs to the mitochondrial Rho GTPase family. As to quaternary structure, homodimer.

It is found in the mitochondrion outer membrane. The catalysed reaction is GTP + H2O = GDP + phosphate + H(+). It carries out the reaction ATP + H2O = ADP + phosphate + H(+). It catalyses the reaction UTP + H2O = UDP + phosphate + H(+). Atypical mitochondrial nucleoside-triphosphatase (NTPase) involved in mitochondrial trafficking. Probably involved in control of anterograde transport of mitochondria and their subcellular distribution. Can hydrolyze GTP, ATP and UTP. This is Mitochondrial Rho GTPase 2 (rhot2) from Xenopus tropicalis (Western clawed frog).